Reading from the N-terminus, the 43-residue chain is Peroxidase (43 aa).

It belongs to the peroxidase family. Classical plant (class III) peroxidase subfamily. Ca(2+) serves as cofactor. Requires heme b as cofactor.

The catalysed reaction is 2 a phenolic donor + H2O2 = 2 a phenolic radical donor + 2 H2O. Removal of H(2)O(2), oxidation of toxic reductants, biosynthesis and degradation of lignin, suberization, auxin catabolism, response to environmental stresses such as wounding, pathogen attack and oxidative stress. These functions might be dependent on each isozyme/isoform in each plant tissue. This Cynara cardunculus var. scolymus (Globe artichoke) protein is Peroxidase.